We begin with the raw amino-acid sequence, 4001 residues long: Ankyrin repeat and KH domain-containing protein mask (4001 aa).

The segment covering 1 to 14 has biased composition (basic and acidic residues); sequence MNNDAKNHESDDLN. 3 disordered regions span residues 1–61, 91–174, and 391–494; these read MNND…NRQL, KNEP…GGGS, and DTDT…FLLD. Over residues 15-30 the composition is skewed to polar residues; the sequence is VRSTAYFNQQTTTNQP. Low complexity predominate over residues 38–61; the sequence is NNTGSGSGSNNNNNNTNQNPNRQL. Residues 94 to 117 are compositionally biased toward polar residues; it reads PLTTTESSGVLTNTPLPSNSRLKV. Low complexity predominate over residues 118–159; sequence NNNNNTNNTAKMSGTSSSQSSATPTPPTASSSTTTTTTTNIS. The span at 160-174 shows a compositional bias: gly residues; the sequence is TGGGGSGSSGGGGGS. Composition is skewed to acidic residues over residues 408–425 and 434–486; these read SESEEESVSEDDIPESDP and VRED…EDAP. Ser-501 is modified (phosphoserine). ANK repeat units lie at residues 546–575, 584–614, 618–647, 651–680, 684–713, 718–747, 751–780, 784–813, 817–846, 851–880, 881–910, 914–943, 947–976, 981–1011, and 1014–1043; these read SGFSRSLVAACTDNDVNTVKRLLCKGNVNL, DGESLLSMACSAGYYELAQVLLAMSAAQVED, KDSTPLMEAASAGHLDIVKLLLNHNADVNA, TGNTPLMFACAGGQVDVVKVLLKHGANVEE, NGHTPLMEAASAGHVEVAKVLLEHGAGINT, FKESALTLACYKGHLDMVRFLLQAGADQEH, EMHTALMEASMDGHVEVARLLLDSGAQVNM, SFESPLTLAACGGHVELATLLIERGANIEE, EGYTPLMEAAREGHEEMVALLLSKGANINA, TQETALTLACCGGFMEVAAFLIKEGANLEL, GASTPLMEASQEGHTDLVSFLLKKKANVHA, TGDTALTHACENGHTDAAGVLLSYGAELEH, GGRTPLMKACRAGHLCTVKFLIQKGANVNK, NDHTALSLACAGGHQSVVELLLKNNADPFHK, and DNSTMLIEASKGGHTRVVELLFRYPNISPT. 2 disordered regions span residues 1046–1067 and 1306–1376; these read AASANVTQAAPTSNQPGPNQMR and QPGE…PTAL. Residues 1367-1376 show a composition bias toward polar residues; that stretch reads DNNQPVPTAL. Phosphoserine is present on residues Ser-1389 and Ser-1588. Disordered regions lie at residues 1583-1612, 1646-1669, 1682-1779, 1852-1872, 2084-2108, and 2225-2256; these read GDQPKSPTETPPEMEETTMSSPTEADRLGS, SDLESECEDDAEGGAGADCEENTL, EDGI…SLPL, VVHQKQQHGEGDQQCEDDGSA, MAQHQAQQQQGVGEPLTEQQQQQLH, and TPAPSSGVSSTKSMPGGIAKKAIDKQSRKERR. Composition is skewed to acidic residues over residues 1646 to 1657, 1685 to 1704, and 1716 to 1759; these read SDLESECEDDAE, IIVEEEEDDEEEDDDDEEQD, and DDED…EPDS. Residues 1760–1776 are compositionally biased toward low complexity; that stretch reads DQGTGNNNNNSKSGASS. A compositionally biased stretch (low complexity) spans 2084-2093; the sequence is MAQHQAQQQQ. The segment covering 2228 to 2237 has biased composition (polar residues); that stretch reads PSSGVSSTKS. ANK repeat units follow at residues 2312-2341, 2345-2374, 2379-2408, 2412-2441, 2447-2476, 2481-2510, 2514-2543, 2549-2578, 2582-2611, and 2615-2644; these read NHDTALTLACAGGHEELVELLINRGANIEH, KGFTPLILAATAGHDKVVDILLKHSAELEA, TKDTPLSLACSGGRYEVVELLLSVGANKEH, SDYTPLSLAASGGYVNIIKLLLSHGAEINS, LGISPLMLAAMNGHTPAVKLLLDQGSDINA, NRNTALTLACFQGRHEVVSLLLDRRANVEH, TGLTPLMEAASGGYIEVGRVLLDKGADVNA, SRDTALTIAADKGHQKFVELLLSRNASVEV, KGNSPLWLAAHGGHLSVVELLYDHNADIDS, and RRVSCLMAAFRKGHTKIVKWMVQYVSQFPS. Residues 2674–2732 adopt a coiled-coil conformation; that stretch reads AKEAQAVKANKNASILLEELDLERTREESRKAAAARRRERKKKKKMEKKEEKRRQQQGN. The residue at position 2687 (Ser-2687) is a Phosphoserine. Thr-2698 carries the post-translational modification Phosphothreonine. Residues 2699 to 3033 form a disordered region; that stretch reads REESRKAAAA…TSTTTAASSV (335 aa). Positions 2706 to 2719 are enriched in basic residues; it reads AAARRRERKKKKKM. Positions 2739 to 2762 are enriched in acidic residues; sequence MQGDDDDASDKDDDSDKDDEDEEA. Phosphoserine occurs at positions 2747 and 2753. Positions 2793-2810 are enriched in low complexity; sequence SQSAQAAEAAANSVSTNS. Positions 2828-2839 are enriched in polar residues; the sequence is EPTQPVITSNSV. Residues 2868–2886 show a composition bias toward basic and acidic residues; the sequence is RQLDVKKEEPALKKKEEKN. Positions 2906 to 2941 are enriched in low complexity; it reads ALPAKQQPSSSSKLQSSESASNINSSTATNTSSANT. Over residues 2950–2960 the composition is skewed to polar residues; sequence ASQTASATTLN. A compositionally biased stretch (basic and acidic residues) spans 2963–2975; the sequence is KRTEVDGWKEVVR. The span at 2995 to 3004 shows a compositional bias: polar residues; that stretch reads TATSSATSVQ. The span at 3012 to 3032 shows a compositional bias: low complexity; it reads ANSSSNSSSSLTTSTTTAASS. Residues 3036 to 3100 form the KH domain; the sequence is MTCKKVQVPV…DATKQAHMLI (65 aa). Low complexity-rich tracts occupy residues 3156–3178, 3195–3227, and 3244–3257; these read ASTTSTSSSSSASSTTPAGASYS, SGRSSTSVKSNGSSTKVSASSGSGSRSGRAGSS, and NGVIKSKSESSSKS. 4 disordered regions span residues 3156-3329, 3383-3457, 3520-3636, and 3744-3786; these read ASTT…GQGG, KPIA…QTSQ, AVGD…PPTA, and IFPQ…GGAA. Over residues 3262–3278 the composition is skewed to polar residues; that stretch reads QKSSTTLGKSSTVSPGA. Positions 3396–3416 are enriched in low complexity; the sequence is GSPTQVQQQHQTQQQQQQQLP. Over residues 3417 to 3427 the composition is skewed to pro residues; sequence QPAPVPGPQPQ. The span at 3428 to 3457 shows a compositional bias: low complexity; sequence QQPLQQQQQQQAPQQQPQQPNQQQQPQTSQ. Positions 3539-3559 are enriched in polar residues; sequence NILSSPVGSSKASSNHSTSPP. Positions 3565–3577 are enriched in low complexity; the sequence is QQQQQQQPQSSQQ. Ser-3596 carries the phosphoserine modification. Low complexity predominate over residues 3774–3786; the sequence is PPGTGARQPGGAA. Residues Ser-3820, Ser-3822, and Ser-3825 each carry the phosphoserine modification. The interval 3876–3945 is disordered; that stretch reads KAQPPGLQQP…HNMQAPPNMS (70 aa). Low complexity predominate over residues 3891 to 3910; it reads SQQQQQQPLNWLKQQPQQQQ.

As to quaternary structure, may interact with Unc-89 (via protein kinase domain 1 or 2). In terms of tissue distribution, expressed ubiquitously in eye imaginal disk, slightly higher expression is seen in presumptive photoreceptors. Expressed in indirect flight muscle (IFM) (at protein level).

It is found in the cytoplasm. It localises to the myofibril. The protein resides in the sarcomere. The protein localises to the z line. Its subcellular location is the m line. Its function is as follows. Mediator of receptor tyrosine kinase (RTK) signaling, and may act either downstream of MAPK or transduce signaling through a parallel branch of the RTK pathway. Required for the development and organization of indirect flight muscle sarcomeres by regulating the formation of M line and H zone and the correct assembly of thick and thin filaments in the sarcomere. In Drosophila melanogaster (Fruit fly), this protein is Ankyrin repeat and KH domain-containing protein mask.